The following is a 280-amino-acid chain: Gastrula zinc finger protein XlCGF46.1 (280 aa).

10 consecutive C2H2-type zinc fingers follow at residues 6-28 (FACK…KLMH), 34-56 (FECT…QLIH), 62-84 (FVCP…LLCH), 90-112 (FTCK…KLTH), 118-140 (FICS…QLIH), 146-168 (YVCT…LRTH), 174-196 (FKCE…KVTH), 202-224 (FTCE…QLTH), 230-252 (FKCE…QRFH), and 258-280 (YKCN…ELSH).

The protein belongs to the krueppel C2H2-type zinc-finger protein family.

The protein localises to the nucleus. In terms of biological role, may be involved in transcriptional regulation. In Xenopus laevis (African clawed frog), this protein is Gastrula zinc finger protein XlCGF46.1.